A 339-amino-acid chain; its full sequence is Glycerol-3-phosphate dehydrogenase [NAD(P)+] (339 aa).

NADPH-binding residues include Ser15, Tyr16, His36, and Lys110. Sn-glycerol 3-phosphate contacts are provided by Lys110, Gly139, and Thr141. Ala143 is an NADPH binding site. Sn-glycerol 3-phosphate-binding residues include Lys195, Asp248, Ser258, Arg259, and Asn260. Catalysis depends on Lys195, which acts as the Proton acceptor. Position 259 (Arg259) interacts with NADPH. Residues Val283 and Glu285 each contribute to the NADPH site.

It belongs to the NAD-dependent glycerol-3-phosphate dehydrogenase family.

It is found in the cytoplasm. The enzyme catalyses sn-glycerol 3-phosphate + NAD(+) = dihydroxyacetone phosphate + NADH + H(+). It carries out the reaction sn-glycerol 3-phosphate + NADP(+) = dihydroxyacetone phosphate + NADPH + H(+). It participates in membrane lipid metabolism; glycerophospholipid metabolism. Functionally, catalyzes the reduction of the glycolytic intermediate dihydroxyacetone phosphate (DHAP) to sn-glycerol 3-phosphate (G3P), the key precursor for phospholipid synthesis. The sequence is that of Glycerol-3-phosphate dehydrogenase [NAD(P)+] from Klebsiella pneumoniae subsp. pneumoniae (strain ATCC 700721 / MGH 78578).